The primary structure comprises 164 residues: CDP-archaeol synthase (164 aa).

A run of 4 helical transmembrane segments spans residues 3-23, 51-71, 77-97, and 122-142; these read LLYFFLLIWPPYVANGSAVLA, YEGFLIGLSTGTFIGYAPNLL, LLDAFVLSIAALLGDLFGAFI, and LAVYTLYKDISVEYIIAAVII.

Belongs to the CDP-archaeol synthase family. The cofactor is Mg(2+).

The protein resides in the cell membrane. The enzyme catalyses 2,3-bis-O-(geranylgeranyl)-sn-glycerol 1-phosphate + CTP + H(+) = CDP-2,3-bis-O-(geranylgeranyl)-sn-glycerol + diphosphate. Its pathway is membrane lipid metabolism; glycerophospholipid metabolism. Functionally, catalyzes the formation of CDP-2,3-bis-(O-geranylgeranyl)-sn-glycerol (CDP-archaeol) from 2,3-bis-(O-geranylgeranyl)-sn-glycerol 1-phosphate (DGGGP) and CTP. This reaction is the third ether-bond-formation step in the biosynthesis of archaeal membrane lipids. This chain is CDP-archaeol synthase, found in Pyrobaculum islandicum (strain DSM 4184 / JCM 9189 / GEO3).